The primary structure comprises 166 residues: Specificity protein transcription factor 2 (166 aa).

A disordered region spans residues 17 to 45 (SYHHSLPSISPPDSPASTSASSSSSSIGA). Positions 31 to 42 (PASTSASSSSSS) are enriched in low complexity. 3 C2H2-type zinc fingers span residues 77–101 (HLCSVPGCGKTYKKTSHLRAHLRKH), 107–131 (FVCDWFDCGKRFDRSDQLIRHKRTH), and 137–160 (FACKFCIRQFSRSDHLQQHLTSVH).

The protein belongs to the Sp1 C2H2-type zinc-finger protein family.

Its function is as follows. Transcription factor. Probably acts downstream of the Wnt signaling pathway. This Caenorhabditis elegans protein is Specificity protein transcription factor 2.